A 383-amino-acid polypeptide reads, in one-letter code: Ribosomal RNA large subunit methyltransferase G (383 aa).

Belongs to the methyltransferase superfamily. RlmG family.

The protein resides in the cytoplasm. It catalyses the reaction guanosine(1835) in 23S rRNA + S-adenosyl-L-methionine = N(2)-methylguanosine(1835) in 23S rRNA + S-adenosyl-L-homocysteine + H(+). Its function is as follows. Specifically methylates the guanine in position 1835 (m2G1835) of 23S rRNA. This is Ribosomal RNA large subunit methyltransferase G from Shewanella denitrificans (strain OS217 / ATCC BAA-1090 / DSM 15013).